The following is a 445-amino-acid chain: Cytoplasmic tRNA 2-thiolation protein 2 (445 aa).

The span at 1–11 (MCSIGEDDFGD) shows a compositional bias: acidic residues. Residues 1–26 (MCSIGEDDFGDEGGVHAMKEESPLPE) form a disordered region. The segment covering 13-22 (GGVHAMKEES) has biased composition (basic and acidic residues).

The protein belongs to the CTU2/NCS2 family.

It is found in the cytoplasm. It functions in the pathway tRNA modification; 5-methoxycarbonylmethyl-2-thiouridine-tRNA biosynthesis. In terms of biological role, plays a central role in 2-thiolation of mcm(5)S(2)U at tRNA wobble positions of tRNA(Lys), tRNA(Glu) and tRNA(Gln). May act by forming a heterodimer with NCS6/CTU1 that ligates sulfur from thiocarboxylated URM1 onto the uridine of tRNAs at wobble position. This Aedes aegypti (Yellowfever mosquito) protein is Cytoplasmic tRNA 2-thiolation protein 2.